The chain runs to 452 residues: Rhodopsin (452 aa).

Topologically, residues 1 to 33 are extracellular; sequence MGRDIPDNETWWYNPYMDIHPHWKQFDQVPAAV. Asn8 carries N-linked (GlcNAc...) asparagine glycosylation. The helical transmembrane segment at 34–58 threads the bilayer; it reads YYSLGIFIAICGIIGCVGNGVVIYL. Topologically, residues 59–70 are cytoplasmic; that stretch reads FTKTKSLQTPAN. The chain crosses the membrane as a helical span at residues 71–97; the sequence is MFIINLAFSDFTFSLVNGFPLMTISCF. Residues 98-109 are Extracellular-facing; it reads MKYWVFGNAACK. Cys108 and Cys186 are joined by a disulfide. A helical transmembrane segment spans residues 110-131; it reads VYGLIGGIFGLMSIMTMTMISI. The 'Ionic lock' involved in activated form stabilization signature appears at 132–134; it reads DRY. Over 132–151 the chain is Cytoplasmic; that stretch reads DRYNVIGRPMSASKKMSHRK. The helical transmembrane segment at 152–172 threads the bilayer; it reads AFIMIIFVWIWSTIWAIGPIF. Over 173-199 the chain is Extracellular; that stretch reads GWGAYTLEGVLCNCSFDYITRDTTTRS. A helical membrane pass occupies residues 200 to 224; the sequence is NILCMYIFAFMCPIVVIFFCYFNIV. The Cytoplasmic portion of the chain corresponds to 225–261; it reads MSVSNHEKEMAAMAKRLNAKELRKAQAGANAEMKLAK. The helical transmembrane segment at 262-283 threads the bilayer; the sequence is ISIVIVTQFLLSWSPYAVVALL. The Extracellular portion of the chain corresponds to 284 to 293; it reads AQFGPIEWVT. Residues 294–315 traverse the membrane as a helical segment; that stretch reads PYAAQLPVMFAKASAIHNPMIY. Lys305 carries the post-translational modification N6-(retinylidene)lysine. The Cytoplasmic portion of the chain corresponds to 316–452; the sequence is SVSHPKFRER…QGVDNQAYQA (137 aa). 2 S-palmitoyl cysteine lipidation sites follow: Cys336 and Cys337. 2 disordered regions span residues 346-365 and 376-452; these read DDKDAEAEIPAGEQSGGETA and MMQK…AYQA. Over residues 376–388 the composition is skewed to low complexity; the sequence is MMQKMQAQQQQQP. The span at 389–440 shows a compositional bias: pro residues; it reads AYPPQGYPPQGYPPPPPQGYPPQGYPPQGYPPQGYPPPPQGPPPQGPPPQAA.

Belongs to the G-protein coupled receptor 1 family. Opsin subfamily. In terms of processing, contains one covalently linked retinal chromophore. Upon light absorption, the covalently bound 11-cis-retinal is converted to all-trans-retinal. After hydrolysis of the Schiff base and release of the covalently bound all-trans-retinal, active rhodopsin is regenerated by binding of a fresh molecule of 11-cis-retinal.

The protein resides in the cell projection. The protein localises to the rhabdomere membrane. Functionally, photoreceptor required for image-forming vision at low light intensity. Light-induced isomerization of 11-cis to all-trans retinal triggers a conformational change that activates signaling via G-proteins. Signaling mediates the activation of phospholipase C. Subsequent receptor phosphorylation mediates displacement of the bound G-protein alpha subunit by arrestin and terminates signaling. This is Rhodopsin (RHO) from Loligo forbesii (Veined squid).